The primary structure comprises 79 residues: U-actitoxin-Bgr3d (79 aa).

An N-terminal signal peptide occupies residues 1–21 (MSYERLLCLVLVASFIAASVA). Residues 22-38 (QHPGDAPRMEDDSSAIQ) constitute a propeptide that is removed on maturation. Cystine bridges form between Cys-44/Cys-76, Cys-46/Cys-69, and Cys-59/Cys-77.

Belongs to the sea anemone type 3 (BDS) potassium channel toxin family.

Its subcellular location is the secreted. The protein resides in the nematocyst. In terms of biological role, potently and selectively inhibits voltage-gated potassium channels Kv11/KCNH/ERG. Acts as a gating-modifier toxin that shifts the voltage-dependence of ERG activation in the positive direction and suppresses its current amplitudes elicited by strong depolarizing pulses that maximally activate the channels. The protein is U-actitoxin-Bgr3d of Bunodosoma granuliferum (Red warty sea anemone).